Consider the following 284-residue polypeptide: Ribosome-associated protein oga1 (284 aa).

The interval Met-1 to Ala-284 is disordered. The span at Thr-22–Asp-36 shows a compositional bias: basic and acidic residues. Ser-37 and Ser-51 each carry phosphoserine. 2 stretches are compositionally biased toward basic and acidic residues: residues Arg-52 to Pro-73 and Gly-119 to Trp-141. The residue at position 160 (Thr-160) is a Phosphothreonine. Ser-162 bears the Phosphoserine mark. The residue at position 166 (Thr-166) is a Phosphothreonine. 2 stretches are compositionally biased toward basic and acidic residues: residues Glu-172–Ser-186 and Thr-194–Pro-209. Over residues Ala-214–Lys-224 the composition is skewed to low complexity. A compositionally biased stretch (basic and acidic residues) spans Ala-226 to Leu-237. Residues Ala-245–Asn-254 are compositionally biased toward low complexity. Over residues Glu-263–Glu-277 the composition is skewed to polar residues.

The protein belongs to the STM1 family. As to quaternary structure, associates with mature 80S ribosomes. Binds to the head domain of the 40S ribosomal subunit and prevents mRNA binding by inserting its alpha-helix domain towards the mRNA entry tunnel at the decoding site, where it blocks the binding of tRNA and mRNA at the A- and P-sites. Interacts with eEF2; interaction sequesters eEF2 at the A-site of the ribosome, thereby blocking the interaction sites of the mRNA-tRNA complex, promoting ribosome stabilization and hibernation. Interacts with sad1. Post-translationally, phosphorylation by TORC1 upon nutrient replenishment inhibits STM1 and causes its release from dormant ribosomes.

Its subcellular location is the cytoplasm. Ribosome preservation factor that protect a small pool of nontranslating, vacant ribosomes in cells under nutrient starvation conditions. Under nutrient-limiting conditions, cells reduce ribosome biogenesis and degrade ribosomes via autophagy (ribophagy) or proteasomal degradation. To avoid excessive degradation during starvation, STM1 binds to and protects 80S ribosomes from proteasomal degradation. Under nutrient-sufficient conditions, TORC1 phosphorylates and inhibits STM1 to prevent formation of dormant 80S ribosomes. Acts as an inhibitor of mRNA translation by promoting ribosome hibernation: clamps the two ribosomal subunits, thereby preventing their dissociation, and inhibits translation by excluding mRNA-binding. Acts via its association with eEF2, promoting ribosome stabilization and storage in an inactive state. May also repress translation by preventing association of eEF3 with ribosomes. Binds specifically G4 quadruplex (these are four-stranded right-handed helices, stabilized by guanine base quartets) and purine motif triplex (characterized by a third, antiparallel purine-rich DNA strand located within the major groove of a homopurine stretch of duplex DNA) nucleic acid structures. These structures may be present at telomeres or in rRNAs. Extends chronological lifespan when overexpressed. This is Ribosome-associated protein oga1 from Schizosaccharomyces pombe (strain 972 / ATCC 24843) (Fission yeast).